A 1293-amino-acid chain; its full sequence is Phosphoribosylformylglycinamidine synthase (1293 aa).

Residues 308-319 (GAATGAGGEIRD) and A675 contribute to the ATP site. Mg(2+)-binding residues include D676, E715, N719, and D883. S885 contacts ATP. One can recognise a Glutamine amidotransferase type-1 domain in the interval 1040–1293 (MAILREQGVN…MFRNARKFIG (254 aa)). C1133 functions as the Nucleophile in the catalytic mechanism. Catalysis depends on residues H1258 and E1260.

The protein in the N-terminal section; belongs to the FGAMS family. In terms of assembly, monomer.

The protein resides in the cytoplasm. It catalyses the reaction N(2)-formyl-N(1)-(5-phospho-beta-D-ribosyl)glycinamide + L-glutamine + ATP + H2O = 2-formamido-N(1)-(5-O-phospho-beta-D-ribosyl)acetamidine + L-glutamate + ADP + phosphate + H(+). Its pathway is purine metabolism; IMP biosynthesis via de novo pathway; 5-amino-1-(5-phospho-D-ribosyl)imidazole from N(2)-formyl-N(1)-(5-phospho-D-ribosyl)glycinamide: step 1/2. Functionally, phosphoribosylformylglycinamidine synthase involved in the purines biosynthetic pathway. Catalyzes the ATP-dependent conversion of formylglycinamide ribonucleotide (FGAR) and glutamine to yield formylglycinamidine ribonucleotide (FGAM) and glutamate. The protein is Phosphoribosylformylglycinamidine synthase of Methylobacillus flagellatus (strain ATCC 51484 / DSM 6875 / VKM B-1610 / KT).